The primary structure comprises 340 residues: MELVRELLRKIAEFENLTAEEMYNLMKEVAEGRATDAQIGALVMGTKMKGETPEEIEGAVKLFREKVVRVPVKDPEELVDVVGTGGDKSSTFNVSTVTGFVLAGAGVKVAKHGNRSVSSKSGSADFLEALGAKVELLPEKVARLIEEVGFGFMFAPLFHPAMKRVVSPRREVGVRSIFNLIGPLTNPAGVKRYLLGVFSKEYVDKFAKALKNLGVKKAFVVHGEGGIDEVSVEGETYVTEVSEEGIRSFTFSPEELGVKRKSLSEVRVNSPEESVKVALSVLRGEEGTPRDMVLLNASFGILVSERAGDIKEAFEMAKESIDSGKALEVLEKYVELSNKI.

5-phospho-alpha-D-ribose 1-diphosphate is bound by residues G83, 86–87 (GD), T91, 93–96 (NVST), 111–119 (KHGNRSVSS), and S123. G83 lines the anthranilate pocket. Residue S95 participates in Mg(2+) binding. N114 serves as a coordination point for anthranilate. R169 is an anthranilate binding site. D228 and E229 together coordinate Mg(2+).

This sequence belongs to the anthranilate phosphoribosyltransferase family. As to quaternary structure, homodimer. It depends on Mg(2+) as a cofactor.

It catalyses the reaction N-(5-phospho-beta-D-ribosyl)anthranilate + diphosphate = 5-phospho-alpha-D-ribose 1-diphosphate + anthranilate. Its pathway is amino-acid biosynthesis; L-tryptophan biosynthesis; L-tryptophan from chorismate: step 2/5. Its function is as follows. Catalyzes the transfer of the phosphoribosyl group of 5-phosphorylribose-1-pyrophosphate (PRPP) to anthranilate to yield N-(5'-phosphoribosyl)-anthranilate (PRA). In Aquifex aeolicus (strain VF5), this protein is Anthranilate phosphoribosyltransferase.